A 309-amino-acid chain; its full sequence is Taste receptor type 2 member 20 (309 aa).

The Extracellular portion of the chain corresponds to 1 to 6 (MMSFLH). Residues 7–27 (IVFSILVVVAFILGNFANGFI) traverse the membrane as a helical segment. At 28 to 46 (ALINFIAWVKRQKISSADQ) the chain is on the cytoplasmic side. Residues 47-67 (IIAALAVSRVGLLWVILLHWY) form a helical membrane-spanning segment. Over 68–79 (STVLNPTSSNLK) the chain is Extracellular. Residues 80 to 100 (VTIFISNAWAVTNHFSIWLAA) form a helical membrane-spanning segment. Residues 101–125 (SLSIFYLLKIVNFSRLIFHHLKRKA) are Cytoplasmic-facing. The chain crosses the membrane as a helical span at residues 126 to 146 (KSVVLVIVLGSLFFLVCHLVM). Residues 147 to 178 (KSTYINVWTEEYEGNVTWKIKLRNAMHLSNLT) lie on the Extracellular side of the membrane. N-linked (GlcNAc...) asparagine glycosylation is found at Asn-161 and Asn-176. Residues 179–199 (VAMLANLIPFTLTLISFLLLI) form a helical membrane-spanning segment. The Cytoplasmic portion of the chain corresponds to 200–229 (YSLCKHLKKMQLHGKGSQDPSTKIHIKALQ). A helical transmembrane segment spans residues 230 to 250 (TVTSFLILLAIYFLCLITSFW). The Extracellular portion of the chain corresponds to 251–259 (NSKMRPKEI). A helical transmembrane segment spans residues 260 to 280 (VLMLCQAFGIIYPSFHSFILI). Residues 281–309 (WGNKTLKQTFLSVLWRVTCWAKGQNQSTP) are Cytoplasmic-facing.

The protein belongs to the G-protein coupled receptor T2R family.

The protein resides in the membrane. In terms of biological role, receptor that may play a role in the perception of bitterness and is gustducin-linked. May play a role in sensing the chemical composition of the gastrointestinal content. The activity of this receptor may stimulate alpha gustducin, mediate PLC-beta-2 activation and lead to the gating of TRPM5. This is Taste receptor type 2 member 20 (TAS2R20) from Gorilla gorilla gorilla (Western lowland gorilla).